A 214-amino-acid chain; its full sequence is Probable nicotinate-nucleotide adenylyltransferase (214 aa).

The protein belongs to the NadD family.

The catalysed reaction is nicotinate beta-D-ribonucleotide + ATP + H(+) = deamido-NAD(+) + diphosphate. It functions in the pathway cofactor biosynthesis; NAD(+) biosynthesis; deamido-NAD(+) from nicotinate D-ribonucleotide: step 1/1. In terms of biological role, catalyzes the reversible adenylation of nicotinate mononucleotide (NaMN) to nicotinic acid adenine dinucleotide (NaAD). The chain is Probable nicotinate-nucleotide adenylyltransferase from Pseudomonas fluorescens (strain ATCC BAA-477 / NRRL B-23932 / Pf-5).